The primary structure comprises 241 residues: Small ribosomal subunit protein uS2 (241 aa).

Belongs to the universal ribosomal protein uS2 family.

The polypeptide is Small ribosomal subunit protein uS2 (Buchnera aphidicola subsp. Cinara cedri (strain Cc)).